The sequence spans 414 residues: Probable uracil permease (414 aa).

Residues 1 to 14 (MTNQIPPSLAENQS) are Cytoplasmic-facing. The helical transmembrane segment at 15 to 38 (KLKQSFVGLQMLFVAFGALVLVPL) threads the bilayer. At 39-42 (ITGL) the chain is on the periplasmic side. A helical transmembrane segment spans residues 43-62 (DSNTALLTAGVGTLLFQFCT). Topologically, residues 63–65 (GKQ) are cytoplasmic. The chain crosses the membrane as a discontinuously helical span at residues 66–82 (VPIFLASSFAFIAPIQY). Residue phenylalanine 74 coordinates uracil. Topologically, residues 83–91 (GVQTWGIAT) are periplasmic. The chain crosses the membrane as a helical span at residues 92–112 (TMGGLAFTGLVYFALSTLVKL). Over 113–124 (RGAEALQRFFPP) the chain is Cytoplasmic. A helical membrane pass occupies residues 125-146 (VVVGPVIIIIGMGLAPIAVDMS). The Periplasmic segment spans residues 147-155 (LGKNSAYAY). The chain crosses the membrane as a helical span at residues 156–171 (NDAVLVSMVTLLTTLS). Topologically, residues 172-178 (VAVFAKG) are cytoplasmic. Residues 179 to 199 (LMKLIPIMFGITAGYILCLFL) traverse the membrane as a helical segment. The Periplasmic segment spans residues 200 to 224 (GLINFQPVIDAPWFSLPKLTTPEFN). Residues 225–248 (LEAILYMLPIAIAPAVEHVGGIMA) traverse the membrane as a helical segment. Glutamate 241 provides a ligand contact to uracil. Over 249-261 (ISSVTGKDFLKKP) the chain is Cytoplasmic. A helical membrane pass occupies residues 262-281 (GLHRTLLGDGIATAAASLVG). A discontinuously helical membrane pass occupies residues 282–298 (GPPNTTYAEVTGAVMLT). Residue glutamate 290 coordinates uracil. The Cytoplasmic portion of the chain corresponds to 299–301 (RNF). Residues 302–319 (NPNIMTWAAVWAIAISFC) form a helical membrane-spanning segment. At 320–332 (GKVGAFLSTIPTI) the chain is on the periplasmic side. The helical transmembrane segment at 333-354 (VMGGIMMLVFGSIAVVGMSTLI) threads the bilayer. At 355–365 (RGKVDVTEARN) the chain is on the cytoplasmic side. An intramembrane region (discontinuously helical) is located at residues 366-401 (LCIISVVMTFGIGNMFVDVGNVSLKGISLCAIVAII). The Cytoplasmic segment spans residues 402 to 414 (LNLVLPKAKNEVE).

Belongs to the nucleobase:cation symporter-2 (NCS2) (TC 2.A.40) family.

It is found in the cell inner membrane. It carries out the reaction uracil(in) + H(+)(in) = uracil(out) + H(+)(out). In terms of biological role, transport of uracil in the cell. The sequence is that of Probable uracil permease (uraA) from Haemophilus influenzae (strain ATCC 51907 / DSM 11121 / KW20 / Rd).